We begin with the raw amino-acid sequence, 273 residues long: DnaJ homolog subfamily C member 27 (273 aa).

The segment at 1–18 (MESNVPKRKEPLKSLRIK) is required for interaction with MAPK1. GTP is bound by residues 23-30 (GNAEVGKS), 71-75 (DMAGH), and 134-137 (NKID). The region spanning 217–273 (DSWEMLGVRPGASREEVNKAYRKLAVLLHPDKCVAPGSEDAFKAVVNARTALLKNIK) is the J domain.

Belongs to the small GTPase superfamily. Rab family. In terms of assembly, interacts directly with MAPK1 (wild-type and kinase-deficient forms). Interacts directly (in GTP-bound form) with MAP2K1 (wild-type and kinase-deficient forms).

Its subcellular location is the nucleus. GTPase which can activate the MEK/ERK pathway and induce cell transformation when overexpressed. May act as a nuclear scaffold for MAPK1, probably by association with MAPK1 nuclear export signal leading to enhanced ERK1/ERK2 signaling. The chain is DnaJ homolog subfamily C member 27 (Dnajc27) from Rattus norvegicus (Rat).